We begin with the raw amino-acid sequence, 282 residues long: Glucuronoxylan 4-O-methyltransferase 1 (282 aa).

Residues 13–33 (VLLVFLLATLILIFIVRSTLT) form a helical membrane-spanning segment.

Belongs to the methyltransferase superfamily. As to expression, expressed in rosette leaves, stems, flowers and siliques.

The protein resides in the golgi apparatus membrane. It catalyses the reaction glucuronoxylan D-glucuronate + n S-adenosyl-L-methionine = glucuronoxylan 4-O-methyl-D-glucuronate + n S-adenosyl-L-homocysteine + n H(+). Functionally, methyltransferase catalyzing 4-O-methylation of glucuronic acid side chains on xylan. This is Glucuronoxylan 4-O-methyltransferase 1 (GXM1) from Arabidopsis thaliana (Mouse-ear cress).